Consider the following 318-residue polypeptide: Beta-ketoacyl-[acyl-carrier-protein] synthase III (318 aa).

Active-site residues include cysteine 112 and histidine 245. The ACP-binding stretch occupies residues 246-250; that stretch reads QANIR. Asparagine 275 is an active-site residue.

This sequence belongs to the thiolase-like superfamily. FabH family. Homodimer.

It localises to the cytoplasm. The catalysed reaction is malonyl-[ACP] + acetyl-CoA + H(+) = 3-oxobutanoyl-[ACP] + CO2 + CoA. It functions in the pathway lipid metabolism; fatty acid biosynthesis. Catalyzes the condensation reaction of fatty acid synthesis by the addition to an acyl acceptor of two carbons from malonyl-ACP. Catalyzes the first condensation reaction which initiates fatty acid synthesis and may therefore play a role in governing the total rate of fatty acid production. Possesses both acetoacetyl-ACP synthase and acetyl transacylase activities. Its substrate specificity determines the biosynthesis of branched-chain and/or straight-chain of fatty acids. The polypeptide is Beta-ketoacyl-[acyl-carrier-protein] synthase III (Rickettsia conorii (strain ATCC VR-613 / Malish 7)).